We begin with the raw amino-acid sequence, 419 residues long: Putative competence-damage inducible protein (419 aa).

The protein belongs to the CinA family.

This chain is Putative competence-damage inducible protein, found in Streptococcus agalactiae serotype Ia (strain ATCC 27591 / A909 / CDC SS700).